Here is a 221-residue protein sequence, read N- to C-terminus: Glutathione peroxidase 6 (221 aa).

The N-terminal stretch at 1–19 (MTQQFWGPCLFSLFMAVLA) is a signal peptide. The active site involves Cys73.

The protein belongs to the glutathione peroxidase family. In terms of tissue distribution, expressed in the Bowman glands.

It localises to the secreted. It catalyses the reaction 2 glutathione + H2O2 = glutathione disulfide + 2 H2O. The polypeptide is Glutathione peroxidase 6 (Gpx6) (Rattus norvegicus (Rat)).